A 139-amino-acid polypeptide reads, in one-letter code: Putative pre-16S rRNA nuclease (139 aa).

This sequence belongs to the YqgF nuclease family.

It is found in the cytoplasm. In terms of biological role, could be a nuclease involved in processing of the 5'-end of pre-16S rRNA. This chain is Putative pre-16S rRNA nuclease, found in Streptococcus pneumoniae serotype 19F (strain G54).